Here is a 294-residue protein sequence, read N- to C-terminus: Acetyl-coenzyme A carboxylase carboxyl transferase subunit beta (294 aa).

The 270-residue stretch at 25 to 294 (VWTKCTSCEQ…PLVVPVDGSH (270 aa)) folds into the CoA carboxyltransferase N-terminal domain. Positions 29, 32, 48, and 51 each coordinate Zn(2+). A C4-type zinc finger spans residues 29-51 (CTSCEQVLYSAELERNLEVCPKC).

The protein belongs to the AccD/PCCB family. Acetyl-CoA carboxylase is a heterohexamer composed of biotin carboxyl carrier protein (AccB), biotin carboxylase (AccC) and two subunits each of ACCase subunit alpha (AccA) and ACCase subunit beta (AccD). The cofactor is Zn(2+).

The protein resides in the cytoplasm. The enzyme catalyses N(6)-carboxybiotinyl-L-lysyl-[protein] + acetyl-CoA = N(6)-biotinyl-L-lysyl-[protein] + malonyl-CoA. Its pathway is lipid metabolism; malonyl-CoA biosynthesis; malonyl-CoA from acetyl-CoA: step 1/1. Component of the acetyl coenzyme A carboxylase (ACC) complex. Biotin carboxylase (BC) catalyzes the carboxylation of biotin on its carrier protein (BCCP) and then the CO(2) group is transferred by the transcarboxylase to acetyl-CoA to form malonyl-CoA. The sequence is that of Acetyl-coenzyme A carboxylase carboxyl transferase subunit beta from Aliivibrio fischeri (strain MJ11) (Vibrio fischeri).